Reading from the N-terminus, the 442-residue chain is UDP-N-acetylmuramate--L-alanine ligase (442 aa).

ATP is bound at residue 109–115 (GAHGKTS).

This sequence belongs to the MurCDEF family.

The protein resides in the cytoplasm. It carries out the reaction UDP-N-acetyl-alpha-D-muramate + L-alanine + ATP = UDP-N-acetyl-alpha-D-muramoyl-L-alanine + ADP + phosphate + H(+). It participates in cell wall biogenesis; peptidoglycan biosynthesis. Functionally, cell wall formation. This Streptococcus pyogenes serotype M49 (strain NZ131) protein is UDP-N-acetylmuramate--L-alanine ligase.